A 239-amino-acid chain; its full sequence is Uridylate kinase (239 aa).

12–15 (KLSG) lines the ATP pocket. The tract at residues 20-25 (GDQGYG) is involved in allosteric activation by GTP. Position 54 (Gly-54) interacts with UMP. ATP-binding residues include Gly-55 and Arg-59. UMP-binding positions include Asp-74 and 135–142 (TGNPYFTT). 3 residues coordinate ATP: Thr-162, Tyr-168, and Asp-171.

Belongs to the UMP kinase family. As to quaternary structure, homohexamer.

The protein localises to the cytoplasm. It carries out the reaction UMP + ATP = UDP + ADP. It participates in pyrimidine metabolism; CTP biosynthesis via de novo pathway; UDP from UMP (UMPK route): step 1/1. Its activity is regulated as follows. Allosterically activated by GTP. Inhibited by UTP. Catalyzes the reversible phosphorylation of UMP to UDP. This is Uridylate kinase from Geobacter metallireducens (strain ATCC 53774 / DSM 7210 / GS-15).